The chain runs to 208 residues: Small ribosomal subunit protein uS4 (208 aa).

The S4 RNA-binding domain occupies 98–161 (RRLDNVIYRL…RKIPVLAEAQ (64 aa)).

Belongs to the universal ribosomal protein uS4 family. As to quaternary structure, part of the 30S ribosomal subunit. Contacts protein S5. The interaction surface between S4 and S5 is involved in control of translational fidelity.

In terms of biological role, one of the primary rRNA binding proteins, it binds directly to 16S rRNA where it nucleates assembly of the body of the 30S subunit. Its function is as follows. With S5 and S12 plays an important role in translational accuracy. This chain is Small ribosomal subunit protein uS4, found in Nitratidesulfovibrio vulgaris (strain ATCC 29579 / DSM 644 / CCUG 34227 / NCIMB 8303 / VKM B-1760 / Hildenborough) (Desulfovibrio vulgaris).